Reading from the N-terminus, the 228-residue chain is Response regulator SaeR (228 aa).

The 114-residue stretch at 3 to 116 folds into the Response regulatory domain; sequence HLLIVDDEQD…ELVLRINNLL (114 aa). Aspartate 51 is subject to 4-aspartylphosphate. The segment at residues 127–226 is a DNA-binding region (ompR/PhoB-type); the sequence is VEQLSFDELT…VWGLGYKFER (100 aa).

Post-translationally, phosphorylated by SaeS.

The protein resides in the cytoplasm. Member of the two-component regulatory system SaeR/SaeS involved in the regulation of staphylococcal virulence factors in a strain-dependent fashion. Probably functions as a transcriptional regulator via a specific DNA-binding domain, recognizing motifs near the promoter sequences of target genes. This is Response regulator SaeR (saeR) from Staphylococcus aureus (strain USA300).